The sequence spans 695 residues: UvrABC system protein B (695 aa).

The Helicase ATP-binding domain occupies 45–434; it reads EGIEDGLSFQ…QVVEQVVRPT (390 aa). 58–65 provides a ligand contact to ATP; sequence GVTGSGKT. The short motif at 111–134 is the Beta-hairpin element; it reads YYDYYQPEAYVPQRDLFIEKDSSI. Residues 449-602 enclose the Helicase C-terminal domain; the sequence is QVDDLLSEIN…QMAFNEANGI (154 aa). Positions 646–681 constitute a UVR domain; that stretch reads SKEIKRLEKLMMDHAKNLEFEKAAQVRDQLAKLKAQ.

The protein belongs to the UvrB family. Forms a heterotetramer with UvrA during the search for lesions. Interacts with UvrC in an incision complex.

Its subcellular location is the cytoplasm. Functionally, the UvrABC repair system catalyzes the recognition and processing of DNA lesions. A damage recognition complex composed of 2 UvrA and 2 UvrB subunits scans DNA for abnormalities. Upon binding of the UvrA(2)B(2) complex to a putative damaged site, the DNA wraps around one UvrB monomer. DNA wrap is dependent on ATP binding by UvrB and probably causes local melting of the DNA helix, facilitating insertion of UvrB beta-hairpin between the DNA strands. Then UvrB probes one DNA strand for the presence of a lesion. If a lesion is found the UvrA subunits dissociate and the UvrB-DNA preincision complex is formed. This complex is subsequently bound by UvrC and the second UvrB is released. If no lesion is found, the DNA wraps around the other UvrB subunit that will check the other stand for damage. The sequence is that of UvrABC system protein B from Cupriavidus pinatubonensis (strain JMP 134 / LMG 1197) (Cupriavidus necator (strain JMP 134)).